A 353-amino-acid chain; its full sequence is Photosystem II protein D1 (353 aa).

Position 2 is an N-acetylthreonine (T2). T2 bears the Phosphothreonine mark. Transmembrane regions (helical) follow at residues 29–46 (NIGWFGVLMIPTLLTATS), 118–133 (HFLLGVACYMGREWEL), and 142–156 (WIAVAYSAPVAAATA). Chlorophyll a is bound at residue H118. A pheophytin a-binding site is contributed by Y126. D170 and E189 together coordinate [CaMn4O5] cluster. Residues 197–218 (FHMLGVAGVFGGSLFSAMHGSL) traverse the membrane as a helical segment. H198 is a binding site for chlorophyll a. A quinone is bound by residues H215 and 264–265 (SF). Residue H215 coordinates Fe cation. Residue H272 participates in Fe cation binding. The helical transmembrane segment at 274 to 288 (FLAAWPVVGIWFTAL) threads the bilayer. Residues H332, E333, D342, and A344 each contribute to the [CaMn4O5] cluster site. Residues 345-353 (AVEAPAVNG) constitute a propeptide that is removed on maturation.

This sequence belongs to the reaction center PufL/M/PsbA/D family. In terms of assembly, PSII is composed of 1 copy each of membrane proteins PsbA, PsbB, PsbC, PsbD, PsbE, PsbF, PsbH, PsbI, PsbJ, PsbK, PsbL, PsbM, PsbT, PsbX, PsbY, PsbZ, Psb30/Ycf12, at least 3 peripheral proteins of the oxygen-evolving complex and a large number of cofactors. It forms dimeric complexes. The cofactor is The D1/D2 heterodimer binds P680, chlorophylls that are the primary electron donor of PSII, and subsequent electron acceptors. It shares a non-heme iron and each subunit binds pheophytin, quinone, additional chlorophylls, carotenoids and lipids. D1 provides most of the ligands for the Mn4-Ca-O5 cluster of the oxygen-evolving complex (OEC). There is also a Cl(-1) ion associated with D1 and D2, which is required for oxygen evolution. The PSII complex binds additional chlorophylls, carotenoids and specific lipids.. Post-translationally, tyr-161 forms a radical intermediate that is referred to as redox-active TyrZ, YZ or Y-Z. In terms of processing, C-terminally processed by CTPA; processing is essential to allow assembly of the oxygen-evolving complex and thus photosynthetic growth.

The protein localises to the plastid. It localises to the chloroplast thylakoid membrane. The enzyme catalyses 2 a plastoquinone + 4 hnu + 2 H2O = 2 a plastoquinol + O2. In terms of biological role, photosystem II (PSII) is a light-driven water:plastoquinone oxidoreductase that uses light energy to abstract electrons from H(2)O, generating O(2) and a proton gradient subsequently used for ATP formation. It consists of a core antenna complex that captures photons, and an electron transfer chain that converts photonic excitation into a charge separation. The D1/D2 (PsbA/PsbD) reaction center heterodimer binds P680, the primary electron donor of PSII as well as several subsequent electron acceptors. The polypeptide is Photosystem II protein D1 (Dumortiera hirsuta (Liverwort)).